The sequence spans 273 residues: 4-hydroxy-tetrahydrodipicolinate reductase (273 aa).

NAD(+) contacts are provided by residues 11–16 (GATGKM) and 106–108 (GTT). His162 serves as the catalytic Proton donor/acceptor. His163 serves as a coordination point for (S)-2,3,4,5-tetrahydrodipicolinate. The active-site Proton donor is Lys166. 172 to 173 (GT) is a binding site for (S)-2,3,4,5-tetrahydrodipicolinate.

The protein belongs to the DapB family.

Its subcellular location is the cytoplasm. It catalyses the reaction (S)-2,3,4,5-tetrahydrodipicolinate + NAD(+) + H2O = (2S,4S)-4-hydroxy-2,3,4,5-tetrahydrodipicolinate + NADH + H(+). It carries out the reaction (S)-2,3,4,5-tetrahydrodipicolinate + NADP(+) + H2O = (2S,4S)-4-hydroxy-2,3,4,5-tetrahydrodipicolinate + NADPH + H(+). Its pathway is amino-acid biosynthesis; L-lysine biosynthesis via DAP pathway; (S)-tetrahydrodipicolinate from L-aspartate: step 4/4. Its function is as follows. Catalyzes the conversion of 4-hydroxy-tetrahydrodipicolinate (HTPA) to tetrahydrodipicolinate. This chain is 4-hydroxy-tetrahydrodipicolinate reductase, found in Synechococcus elongatus (strain ATCC 33912 / PCC 7942 / FACHB-805) (Anacystis nidulans R2).